We begin with the raw amino-acid sequence, 674 residues long: Xaa-Pro aminopeptidase 2 (674 aa).

Positions 1-22 are cleaved as a signal peptide; it reads MAQAYWQCYPWLVLLCACAWSY. Residue Asn-65 is glycosylated (N-linked (GlcNAc...) asparagine). Arg-116 is a binding site for substrate. 2 N-linked (GlcNAc...) asparagine glycosylation sites follow: Asn-278 and Asn-293. Residue His-430 participates in substrate binding. Zn(2+) is bound by residues Asp-450, Asp-461, and His-524. Substrate contacts are provided by His-524, His-533, and Glu-555. 2 residues coordinate Zn(2+): Glu-555 and Glu-569. Ala-650 carries the GPI-anchor amidated alanine lipid modification. Residues 651–674 constitute a propeptide, removed in mature form; the sequence is SAPHTTSLASMWVASALAILSWSC.

The protein belongs to the peptidase M24B family. In terms of assembly, homotrimer. Zn(2+) is required as a cofactor. Post-translationally, N-glycosylated. In terms of tissue distribution, expressed strongly in lung, liver and heart, and at lower levels in kidney, testis, brain, spleen and skeletal muscle.

The protein resides in the cell membrane. It catalyses the reaction Release of any N-terminal amino acid, including proline, that is linked to proline, even from a dipeptide or tripeptide.. Inhibited by the chelating agents 1,10-phenanthroline and EDTA. Inhibited by the thiol-containing compounds 2-mercaptoethanol and dithiothreitol. Also inhibited by apstatin, captopril and p-(ch1oromercuri)benzenesulfonic acid. Weakly inhibited by D,L-2-mercaptomethyl-3-guanidinoethylthiopropanoic acid and N-[l-(R,S)-carboxy-(2-phenylethyl)]-Ala-Ala-Phe-p-aminobenzoate. Inhibited by ramiprilat and enalaprilat, in a Mn(2+)-dependent manner. Metal ions have a complex substrate- and concentration-dependent effect on activity. Activity towards Arg-Pro-Pro and Gly-Pro-Hyp is stimulated by Mn(2+) ion concentrations of 10-100 uM and then inhibited at Mn(2+) concentrations of 1-2 mM. Mn(2+) concentrations in excess of 2 mM stimulate activity towards Gly-Pro-Hyp but inhibit activity towards Arg-Pro-Pro. Zn(2+) and Co(2+) ions also inhibit activity towards Arg-Pro-Pro at high concentrations. Activity towards bradykinin is inhibited by Mn(2+) concentrations in excess of 1 mM. In terms of biological role, membrane-bound metalloprotease which catalyzes the removal of a penultimate prolyl residue from the N-termini of peptides, such as Arg-Pro-Pro. May play a role in the metabolism of the vasodilator bradykinin. The polypeptide is Xaa-Pro aminopeptidase 2 (Rattus norvegicus (Rat)).